A 593-amino-acid chain; its full sequence is Proline--tRNA ligase (593 aa).

This sequence belongs to the class-II aminoacyl-tRNA synthetase family. ProS type 1 subfamily. Homodimer.

It is found in the cytoplasm. It carries out the reaction tRNA(Pro) + L-proline + ATP = L-prolyl-tRNA(Pro) + AMP + diphosphate. Its function is as follows. Catalyzes the attachment of proline to tRNA(Pro) in a two-step reaction: proline is first activated by ATP to form Pro-AMP and then transferred to the acceptor end of tRNA(Pro). As ProRS can inadvertently accommodate and process non-cognate amino acids such as alanine and cysteine, to avoid such errors it has two additional distinct editing activities against alanine. One activity is designated as 'pretransfer' editing and involves the tRNA(Pro)-independent hydrolysis of activated Ala-AMP. The other activity is designated 'posttransfer' editing and involves deacylation of mischarged Ala-tRNA(Pro). The misacylated Cys-tRNA(Pro) is not edited by ProRS. In Synechococcus sp. (strain CC9605), this protein is Proline--tRNA ligase.